Reading from the N-terminus, the 92-residue chain is MVENVIYPAYLDASLSRSEGRRVAQSAAVEAPTVDEIAKAVQQVGYDAVIERDKRYSREFETRGRVLVNNADDATKNDIVQAVAAYVGILRD.

This sequence belongs to the SRP19 family. In terms of assembly, part of the signal recognition particle protein translocation system, which is composed of SRP and FtsY. Archaeal SRP consists of a 7S RNA molecule of 300 nucleotides and two protein subunits: SRP54 and SRP19.

The protein localises to the cytoplasm. Functionally, involved in targeting and insertion of nascent membrane proteins into the cytoplasmic membrane. Binds directly to 7S RNA and mediates binding of the 54 kDa subunit of the SRP. The chain is Signal recognition particle 19 kDa protein from Haloferax volcanii (strain ATCC 29605 / DSM 3757 / JCM 8879 / NBRC 14742 / NCIMB 2012 / VKM B-1768 / DS2) (Halobacterium volcanii).